The sequence spans 132 residues: Agouti-signaling protein (132 aa).

A signal peptide spans 1 to 22 (MDVTRLLLATLLVFLCFFTVYS). Residue N39 is glycosylated (N-linked (GlcNAc...) asparagine). A disordered region spans residues 61 to 87 (HISRKEAEKKRSSKKEASMKKVARPRT). Over residues 64 to 79 (RKEAEKKRSSKKEASM) the composition is skewed to basic and acidic residues. Intrachain disulfides connect C93–C108, C100–C114, C107–C125, C111–C132, and C116–C123. The Agouti domain occupies 93-132 (CVATRDSCKPPAPACCDPCASCQCRFFRSACSCRVLSLNC).

The protein localises to the secreted. In terms of biological role, involved in the regulation of melanogenesis. The binding of ASP to MC1R precludes alpha-MSH initiated signaling and thus blocks production of cAMP, leading to a down-regulation of eumelanogenesis (brown/black pigment) and thus increasing synthesis of pheomelanin (yellow/red pigment). The polypeptide is Agouti-signaling protein (ASIP) (Colobus polykomos (Western black-and-white colobus monkey)).